We begin with the raw amino-acid sequence, 54 residues long: Large ribosomal subunit protein bL33 (54 aa).

It belongs to the bacterial ribosomal protein bL33 family.

This chain is Large ribosomal subunit protein bL33, found in Opitutus terrae (strain DSM 11246 / JCM 15787 / PB90-1).